The sequence spans 134 residues: Ribonuclease P protein component (134 aa).

This sequence belongs to the RnpA family. As to quaternary structure, consists of a catalytic RNA component (M1 or rnpB) and a protein subunit.

The enzyme catalyses Endonucleolytic cleavage of RNA, removing 5'-extranucleotides from tRNA precursor.. RNaseP catalyzes the removal of the 5'-leader sequence from pre-tRNA to produce the mature 5'-terminus. It can also cleave other RNA substrates such as 4.5S RNA. The protein component plays an auxiliary but essential role in vivo by binding to the 5'-leader sequence and broadening the substrate specificity of the ribozyme. The polypeptide is Ribonuclease P protein component (Pseudomonas putida (strain ATCC 700007 / DSM 6899 / JCM 31910 / BCRC 17059 / LMG 24140 / F1)).